Reading from the N-terminus, the 438-residue chain is Protein SPMIP7 (438 aa).

In terms of tissue distribution, testis-specific.

In terms of biological role, essential for normal spermatogenesis. This Homo sapiens (Human) protein is Protein SPMIP7.